The primary structure comprises 1172 residues: Putative cadmium/zinc-transporting ATPase HMA4 (1172 aa).

The Cytoplasmic portion of the chain corresponds to 1–93 (MALQNKEEEK…VRVNGETSFK (93 aa)). The HMA domain maps to 17–83 (QKSYFDVLGI…ALNEARLEAN (67 aa)). Residues 94–115 (NKWPSPFAVVSGLLLLLSFLKF) form a helical membrane-spanning segment. Residues 116–118 (VYS) are Extracellular-facing. A helical transmembrane segment spans residues 119–138 (PLRWLAVAAVAAGIYPILAK). At 139 to 145 (AFASIKR) the chain is on the cytoplasmic side. Residues 146–166 (PRIDINILVIITVIATLAMQD) form a helical membrane-spanning segment. Residue F167 is a topological domain, extracellular. Residues 168 to 188 (MEAAAVVFLFTISDWLETRAS) form a helical membrane-spanning segment. The Cytoplasmic segment spans residues 189–314 (YKATSVMQSL…KTKSQRLIDK (126 aa)). Residues 315 to 337 (CSQYYTPAIILVSACVAIVPVIM) form a helical membrane-spanning segment. Over 338-345 (KVHNLKHW) the chain is Extracellular. The helical transmembrane segment at 346 to 363 (FHLALVVLVSGCPCGLIL) threads the bilayer. Over 364–656 (STPVATFCAL…KLARRARRKV (293 aa)) the chain is Cytoplasmic. D401 functions as the 4-aspartylphosphate intermediate in the catalytic mechanism. 2 residues coordinate Mg(2+): D601 and D605. Residues 657 to 676 (VENVCLSIILKAGILALAFA) form a helical membrane-spanning segment. Residues 677–680 (GHPL) are Extracellular-facing. A helical transmembrane segment spans residues 681 to 700 (IWAAVLVDVGTCLLVIFNSM). The Cytoplasmic segment spans residues 701–1172 (LLLREKKKIG…HHHHHHHVSA (472 aa)).

Belongs to the cation transport ATPase (P-type) (TC 3.A.3) family. Type IB subfamily.

It localises to the membrane. The enzyme catalyses Zn(2+)(in) + ATP + H2O = Zn(2+)(out) + ADP + phosphate + H(+). It catalyses the reaction Cd(2+)(in) + ATP + H2O = Cd(2+)(out) + ADP + phosphate + H(+). Its function is as follows. Involved in cadmium/zinc transport. This is Putative cadmium/zinc-transporting ATPase HMA4 (HMA4) from Arabidopsis thaliana (Mouse-ear cress).